A 212-amino-acid chain; its full sequence is MSERSVSKQKSSDRWYSIIAPEQFDRSELGSTFADDPEKIHGRTLEVTLGDITGDQGENNTKLTFKVNDVTSDAAYTEFIKHELARDYLRSLIRRGASKIDAAITVRTTDDYRVQLQPVAFTTKKADRSQEQAIRRVMIDLVEDAADERTFADLIDAAIEGQLSSAIYGEAKTIYPLRRVEVKKLTLEARPEEVAAEEAAAVDVDEADVAVE.

Belongs to the eukaryotic ribosomal protein eS1 family.

The chain is Small ribosomal subunit protein eS1 from Haloquadratum walsbyi (strain DSM 16790 / HBSQ001).